A 201-amino-acid polypeptide reads, in one-letter code: Peptidyl-tRNA hydrolase (201 aa).

Tyr-15 contributes to the tRNA binding site. Catalysis depends on His-20, which acts as the Proton acceptor. Residues Tyr-66, Asn-68, and Asn-114 each coordinate tRNA.

It belongs to the PTH family. Monomer.

The protein localises to the cytoplasm. It catalyses the reaction an N-acyl-L-alpha-aminoacyl-tRNA + H2O = an N-acyl-L-amino acid + a tRNA + H(+). Functionally, hydrolyzes ribosome-free peptidyl-tRNAs (with 1 or more amino acids incorporated), which drop off the ribosome during protein synthesis, or as a result of ribosome stalling. Its function is as follows. Catalyzes the release of premature peptidyl moieties from peptidyl-tRNA molecules trapped in stalled 50S ribosomal subunits, and thus maintains levels of free tRNAs and 50S ribosomes. The protein is Peptidyl-tRNA hydrolase of Burkholderia thailandensis (strain ATCC 700388 / DSM 13276 / CCUG 48851 / CIP 106301 / E264).